A 515-amino-acid polypeptide reads, in one-letter code: MEIRADEISRIIREQIKDYGKKVTVAETGTVLSVGDGIARIYGLEGALAGELVEFANGVQGLVLNLEEDNVGVAIMGDFQAIREGDTVKRTQQIASVPVGKELLGRVVDPLGKPLDGKGPIAATETRRLEVKAPGIVSRKSVHEPLQTGIKALDALVPVGRGQRELIIGDRQTGKTAVAIDTIINQKGLNVYCIYVAIGQKQSTVAQVVEKLNRYGAMEYTTVVASNASDPAPMQFFAPYAGVAMGEYFRDNKMHALIVYDDLSKQAVAYRQLSLLLRRPPGREAYPGDVFYVHSRLLERAAKLSDEEGAGSLTALPIIETQAGDVSAYIPTNVISITDGQIFLETDLFFAGVRPAINVGLSVSRVGSAAQIKAMKQVAGTMKLELAQYRELAAFAQFGSDLDKATQETLARGARMVELLKQGQYEPMPVEKQVMQIYAATNRDDPKKRGWIRDIPTADVVRWMREFLEFADGKHPNVAKDLASKRELTADIKTALSKAITEFNEVFQPTPGAKV.

Residue 169 to 176 coordinates ATP; it reads GDRQTGKT.

This sequence belongs to the ATPase alpha/beta chains family. As to quaternary structure, F-type ATPases have 2 components, CF(1) - the catalytic core - and CF(0) - the membrane proton channel. CF(1) has five subunits: alpha(3), beta(3), gamma(1), delta(1), epsilon(1). CF(0) has three main subunits: a(1), b(2) and c(9-12). The alpha and beta chains form an alternating ring which encloses part of the gamma chain. CF(1) is attached to CF(0) by a central stalk formed by the gamma and epsilon chains, while a peripheral stalk is formed by the delta and b chains.

The protein resides in the cell inner membrane. It catalyses the reaction ATP + H2O + 4 H(+)(in) = ADP + phosphate + 5 H(+)(out). In terms of biological role, produces ATP from ADP in the presence of a proton gradient across the membrane. The alpha chain is a regulatory subunit. This is ATP synthase subunit alpha from Myxococcus xanthus.